A 212-amino-acid chain; its full sequence is Uridine kinase (212 aa).

13 to 20 contacts ATP; it reads GGSGSGKT.

This sequence belongs to the uridine kinase family.

The protein resides in the cytoplasm. It catalyses the reaction uridine + ATP = UMP + ADP + H(+). It carries out the reaction cytidine + ATP = CMP + ADP + H(+). Its pathway is pyrimidine metabolism; CTP biosynthesis via salvage pathway; CTP from cytidine: step 1/3. It participates in pyrimidine metabolism; UMP biosynthesis via salvage pathway; UMP from uridine: step 1/1. In Bacillus mycoides (strain KBAB4) (Bacillus weihenstephanensis), this protein is Uridine kinase.